The sequence spans 417 residues: NADH-quinone oxidoreductase subunit D (417 aa).

Belongs to the complex I 49 kDa subunit family. NDH-1 is composed of 14 different subunits. Subunits NuoB, C, D, E, F, and G constitute the peripheral sector of the complex.

It localises to the cell inner membrane. The enzyme catalyses a quinone + NADH + 5 H(+)(in) = a quinol + NAD(+) + 4 H(+)(out). Functionally, NDH-1 shuttles electrons from NADH, via FMN and iron-sulfur (Fe-S) centers, to quinones in the respiratory chain. The immediate electron acceptor for the enzyme in this species is believed to be ubiquinone. Couples the redox reaction to proton translocation (for every two electrons transferred, four hydrogen ions are translocated across the cytoplasmic membrane), and thus conserves the redox energy in a proton gradient. The chain is NADH-quinone oxidoreductase subunit D from Ruthia magnifica subsp. Calyptogena magnifica.